Reading from the N-terminus, the 112-residue chain is MKKVLFLLLACAAVAFAAEINAPVEQEAINVWIKAFSVLAAGLGLGVAALGGAIGMGNTAAATIAGTARNPGLGPKLMTTMFIALAMIEAQVIYALVIALIALYANPFIVLQ.

Helical transmembrane passes span Phe-36–Met-56 and Met-81–Ile-101.

It belongs to the ATPase C chain family. F-type ATPases have 2 components, F(1) - the catalytic core - and F(0) - the membrane proton channel. F(1) has five subunits: alpha(3), beta(3), gamma(1), delta(1), epsilon(1). F(0) has three main subunits: a(1), b(2) and c(10-14). The alpha and beta chains form an alternating ring which encloses part of the gamma chain. F(1) is attached to F(0) by a central stalk formed by the gamma and epsilon chains, while a peripheral stalk is formed by the delta and b chains.

The protein localises to the cell inner membrane. Its function is as follows. F(1)F(0) ATP synthase produces ATP from ADP in the presence of a proton or sodium gradient. F-type ATPases consist of two structural domains, F(1) containing the extramembraneous catalytic core and F(0) containing the membrane proton channel, linked together by a central stalk and a peripheral stalk. During catalysis, ATP synthesis in the catalytic domain of F(1) is coupled via a rotary mechanism of the central stalk subunits to proton translocation. Functionally, key component of the F(0) channel; it plays a direct role in translocation across the membrane. A homomeric c-ring of between 10-14 subunits forms the central stalk rotor element with the F(1) delta and epsilon subunits. This is ATP synthase subunit c from Campylobacter jejuni (strain RM1221).